Here is a 603-residue protein sequence, read N- to C-terminus: NADPH-dependent diflavin oxidoreductase 1 (603 aa).

A Flavodoxin-like domain is found at 8 to 152 (VLVLYGSETG…SFVRWTGRLY (145 aa)). Residues 14–19 (SETGNA), 61–64 (STTG), 99–108 (LGDSTYLKFN), and E134 each bind FMN. The region spanning 210–457 (PDGWTATLVG…RKPVLSPIHG (248 aa)) is the FAD-binding FR-type domain. FAD-binding positions include R358, 388-391 (RDFS), and 429-432 (GLCS). NADP(+)-binding positions include T472, 528 to 529 (SR), and 534 to 538 (KIYVQ). W603 provides a ligand contact to FAD.

It belongs to the NADPH-dependent diflavin oxidoreductase NDOR1 family. In the N-terminal section; belongs to the flavodoxin family. This sequence in the C-terminal section; belongs to the flavoprotein pyridine nucleotide cytochrome reductase family. In terms of assembly, interacts with DRE2; as part of the cytosolic iron-sulfur (Fe-S) protein assembly (CIA) machinery. Requires FAD as cofactor. FMN is required as a cofactor.

The protein localises to the cytoplasm. It localises to the mitochondrion. The enzyme catalyses 2 oxidized [2Fe-2S]-[protein] + NADPH = 2 reduced [2Fe-2S]-[protein] + NADP(+) + H(+). NADPH-dependent reductase which is a central component of the cytosolic iron-sulfur (Fe-S) protein assembly (CIA) machinery. Transfers electrons from NADPH via its FAD and FMN prosthetic groups to the [2Fe-2S] cluster of DRE2, another key component of the CIA machinery. In turn, this reduced cluster provides electrons for assembly of cytosolic iron-sulfur cluster proteins. Positively controls H(2)O(2)-induced cell death. The chain is NADPH-dependent diflavin oxidoreductase 1 from Gibberella zeae (strain ATCC MYA-4620 / CBS 123657 / FGSC 9075 / NRRL 31084 / PH-1) (Wheat head blight fungus).